The sequence spans 725 residues: Another transcription unit protein (725 aa).

Residues 1 to 10 show a composition bias toward acidic residues; that stretch reads MGSQNSDDDS. Disordered stretches follow at residues 1-379, 566-603, and 617-725; these read MGSQ…PETR, RQAM…EGSD, and YKKG…SDND. A compositionally biased stretch (low complexity) spans 11 to 70; sequence GSSGSSRSGSRSVTPQGGSAPGSQRSRRSGSGSDRSRSGSRSSRSRSGSGSPRSARSGSA. Residues 82-101 show a composition bias toward basic residues; the sequence is RSKRSRSAHSRRSGSARSRK. Polar residues predominate over residues 104 to 116; sequence TPESPQSHRSGSL. Residues 117-140 show a composition bias toward low complexity; it reads QSRKSGSPQSRRSGSPQSRKSGST. The span at 141 to 160 shows a compositional bias: basic residues; that stretch reads HSRRSGSAHSRRSGSARSRK. A phosphoserine mark is found at S175, S186, S188, and S190. The span at 206 to 223 shows a compositional bias: basic residues; that stretch reads SRSRSRSRSGSRTSRSRS. Low complexity predominate over residues 224–242; that stretch reads KTGTPSPNRSRSGSASGSG. Phosphoserine is present on residues S265, S267, and S269. T286 carries the phosphothreonine modification. A phosphoserine mark is found at S288, S290, and S312. Over residues 306–318 the composition is skewed to acidic residues; sequence GDADDISDDEDEA. The span at 325–353 shows a compositional bias: basic residues; that stretch reads SPVRSKSRSQSKSHSHSRSMSHSRSRSRS. Over residues 354-369 the composition is skewed to basic and acidic residues; the sequence is RSRDKVESQVESAPKE. The residue at position 355 (S355) is a Phosphoserine. The span at 571-582 shows a compositional bias: basic residues; that stretch reads NQHKSLPKKKKP. Phosphothreonine is present on T593. A phosphoserine mark is found at S595, S602, and S631. T632 is subject to Phosphothreonine. Phosphoserine occurs at positions 635, 636, and 642. Over residues 644–665 the composition is skewed to basic and acidic residues; sequence FEARRSKKVDKAKASKALRDSD. Gly residues predominate over residues 710–725; it reads SGSGSGSGSGSGSDND.

In Drosophila melanogaster (Fruit fly), this protein is Another transcription unit protein (Atu).